The primary structure comprises 196 residues: Peroxynitrite isomerase (196 aa).

The GXWXGXG motif lies at 46-52 (GVWRGRG). His186 serves as a coordination point for heme b.

Belongs to the nitrobindin family. Homodimer. It depends on heme b as a cofactor.

The catalysed reaction is peroxynitrite = nitrate. It functions in the pathway nitrogen metabolism. Functionally, heme-binding protein able to scavenge peroxynitrite and to protect free L-tyrosine against peroxynitrite-mediated nitration, by acting as a peroxynitrite isomerase that converts peroxynitrite to nitrate. Therefore, this protein likely plays a role in peroxynitrite sensing and in the detoxification of reactive nitrogen and oxygen species (RNS and ROS, respectively). Is able to bind nitric oxide (NO) in vitro, but may act as a sensor of peroxynitrite levels in vivo. This chain is Peroxynitrite isomerase, found in Salinispora tropica (strain ATCC BAA-916 / DSM 44818 / JCM 13857 / NBRC 105044 / CNB-440).